The following is a 651-amino-acid chain: Protein transport protein SEC9 (651 aa).

Disordered regions lie at residues 1–22, 53–299, and 313–332; these read MGLK…QNKD, AEDK…QAPM, and RNSE…DFEE. Phosphoserine is present on residues Ser79 and Ser92. Residues 86–112 show a composition bias toward polar residues; it reads NEATAGSNRGSSGTQDLGNGAESNSMQ. Residues 120–129 are compositionally biased toward basic and acidic residues; sequence DDYRYDDDPY. 2 stretches are compositionally biased toward polar residues: residues 157-218 and 244-284; these read GTSL…SLDQ and DSNT…ANPY. Ser186, Ser190, Ser213, Ser271, and Ser273 each carry phosphoserine. Positions 285–296 are enriched in low complexity; that stretch reads SSRSVRQPQSQQ. Residues 313 to 327 are compositionally biased toward basic and acidic residues; sequence RNSEVDLNEEPRTGE. Phosphoserine is present on Ser315. A Phosphothreonine modification is found at Thr355. The residue at position 359 (Ser359) is a Phosphoserine. T-SNARE coiled-coil homology domains lie at 434–496 and 588–650; these read KFTK…VAEL and DEME…LAGI.

This sequence belongs to the SNAP-25 family. As to quaternary structure, interacts with SRO7 and SRO77.

Component of a SNARE complex that may be the effector of SEC4 function in exocytosis. The polypeptide is Protein transport protein SEC9 (SEC9) (Saccharomyces cerevisiae (strain ATCC 204508 / S288c) (Baker's yeast)).